The chain runs to 215 residues: Large ribosomal subunit protein uL1 (215 aa).

This sequence belongs to the universal ribosomal protein uL1 family. As to quaternary structure, part of the 50S ribosomal subunit.

Its function is as follows. Binds directly to 23S rRNA. Probably involved in E site tRNA release. Functionally, protein L1 is also a translational repressor protein, it controls the translation of its operon by binding to its mRNA. The sequence is that of Large ribosomal subunit protein uL1 from Methanospirillum hungatei JF-1 (strain ATCC 27890 / DSM 864 / NBRC 100397 / JF-1).